Consider the following 78-residue polypeptide: Small ribosomal subunit protein uS17 (78 aa).

The protein belongs to the universal ribosomal protein uS17 family. Part of the 30S ribosomal subunit.

Functionally, one of the primary rRNA binding proteins, it binds specifically to the 5'-end of 16S ribosomal RNA. In Maricaulis maris (strain MCS10) (Caulobacter maris), this protein is Small ribosomal subunit protein uS17.